Reading from the N-terminus, the 113-residue chain is Iron-sulfur cluster insertion protein ErpA (113 aa).

The iron-sulfur cluster site is built by Cys41, Cys105, and Cys107.

This sequence belongs to the HesB/IscA family. Homodimer. The cofactor is iron-sulfur cluster.

In terms of biological role, required for insertion of 4Fe-4S clusters for at least IspG. This Histophilus somni (strain 2336) (Haemophilus somnus) protein is Iron-sulfur cluster insertion protein ErpA.